A 258-amino-acid polypeptide reads, in one-letter code: Glucosamine-6-phosphate deaminase (258 aa).

Residue aspartate 65 is the Proton acceptor; for enolization step of the active site. The active-site For ring-opening step is the aspartate 134. Residue histidine 136 is the Proton acceptor; for ring-opening step of the active site. Glutamate 141 serves as the catalytic For ring-opening step.

The protein belongs to the glucosamine/galactosamine-6-phosphate isomerase family. NagB subfamily.

The catalysed reaction is alpha-D-glucosamine 6-phosphate + H2O = beta-D-fructose 6-phosphate + NH4(+). It participates in amino-sugar metabolism; N-acetylneuraminate degradation; D-fructose 6-phosphate from N-acetylneuraminate: step 5/5. Its function is as follows. Catalyzes the reversible isomerization-deamination of glucosamine 6-phosphate (GlcN6P) to form fructose 6-phosphate (Fru6P) and ammonium ion. The protein is Glucosamine-6-phosphate deaminase of Corynebacterium kroppenstedtii (strain DSM 44385 / JCM 11950 / CIP 105744 / CCUG 35717).